The primary structure comprises 149 residues: Cytochrome c-type biogenesis protein CcmE (149 aa).

The Cytoplasmic portion of the chain corresponds to Met-1–Lys-7. A helical; Signal-anchor for type II membrane protein transmembrane segment spans residues Met-8 to Ala-28. The Periplasmic segment spans residues Phe-29–Gln-149. Residues His-123 and Tyr-127 each contribute to the heme site.

This sequence belongs to the CcmE/CycJ family.

The protein localises to the cell inner membrane. In terms of biological role, heme chaperone required for the biogenesis of c-type cytochromes. Transiently binds heme delivered by CcmC and transfers the heme to apo-cytochromes in a process facilitated by CcmF and CcmH. The sequence is that of Cytochrome c-type biogenesis protein CcmE from Nitrosomonas europaea (strain ATCC 19718 / CIP 103999 / KCTC 2705 / NBRC 14298).